The primary structure comprises 207 residues: A-type ATP synthase subunit E (207 aa).

This sequence belongs to the V-ATPase E subunit family. Has multiple subunits with at least A(3), B(3), C, D, E, F, H, I and proteolipid K(x).

Its subcellular location is the cell membrane. Component of the A-type ATP synthase that produces ATP from ADP in the presence of a proton gradient across the membrane. The sequence is that of A-type ATP synthase subunit E from Methanosphaera stadtmanae (strain ATCC 43021 / DSM 3091 / JCM 11832 / MCB-3).